Reading from the N-terminus, the 383-residue chain is Processive diacylglycerol beta-glucosyltransferase (383 aa).

It belongs to the glycosyltransferase 28 family. UgtP subfamily.

Its subcellular location is the cell membrane. It carries out the reaction a 1,2-diacyl-3-O-(beta-D-glucopyranosyl)-sn-glycerol + UDP-alpha-D-glucose = a 1,2-diacyl-3-O-(beta-D-Glc-(1-&gt;6)-beta-D-Glc)-sn-glycerol + UDP + H(+). The enzyme catalyses a 1,2-diacyl-3-O-(beta-D-Glc-(1-&gt;6)-beta-D-Glc)-sn-glycerol + UDP-alpha-D-glucose = a 1,2-diacyl-3-O-(beta-D-Glc-(1-&gt;6)-beta-D-Glc-(1-&gt;6)-beta-D-Glc)-sn-glycerol + UDP + H(+). The catalysed reaction is a 1,2-diacyl-sn-glycerol + UDP-alpha-D-glucose = a 1,2-diacyl-3-O-(beta-D-glucopyranosyl)-sn-glycerol + UDP + H(+). The protein operates within glycolipid metabolism; diglucosyl-diacylglycerol biosynthesis. Its function is as follows. Processive glucosyltransferase involved in the biosynthesis of both the bilayer- and non-bilayer-forming membrane glucolipids. Is able to successively transfer up to three glucosyl residues to diacylglycerol (DAG), thereby catalyzing the formation of beta-monoglucosyl-DAG (3-O-(beta-D-glucopyranosyl)-1,2-diacyl-sn-glycerol), beta-diglucosyl-DAG (3-O-(beta-D-glucopyranosyl-beta-(1-&gt;6)-D-glucopyranosyl)-1,2-diacyl-sn-glycerol) and beta-triglucosyl-DAG (3-O-(beta-D-glucopyranosyl-beta-(1-&gt;6)-D-glucopyranosyl-beta-(1-&gt;6)-D-glucopyranosyl)-1,2-diacyl-sn-glycerol). Beta-diglucosyl-DAG is the predominant glycolipid found in Bacillales and is also used as a membrane anchor for lipoteichoic acid (LTA). This is Processive diacylglycerol beta-glucosyltransferase from Bacillus licheniformis (strain ATCC 14580 / DSM 13 / JCM 2505 / CCUG 7422 / NBRC 12200 / NCIMB 9375 / NCTC 10341 / NRRL NRS-1264 / Gibson 46).